The sequence spans 1100 residues: Exportin-T (1100 aa).

This sequence belongs to the exportin family. As to quaternary structure, interacts with GSP1, GSP2, NSP1, NUP2 and UTP8.

The protein resides in the nucleus. Its subcellular location is the cytoplasm. Its function is as follows. tRNA nucleus export receptor which facilitates tRNA translocation across the nuclear pore complex. Preferentially interacts with tRNAs with mature 5'- and 3'-termini and does not distinguish between intron-containing and spliced tRNAs. In the nucleus binds to tRNA and to the Ran-GTPases GSP1 or GSP2 in their active GTP-bound form. Docking of this trimeric complex to the nuclear pore complex (NPC) is mediated through binding to nucleoporins. Upon transit of a nuclear export complex into the cytoplasm, disassembling of the complex and hydrolysis of Ran-GTP to Ran-GDP cause release of the tRNA from the export receptor. The directionality of nuclear export is thought to be conferred by an asymmetric distribution of the GTP- and GDP-bound forms of Ran between the cytoplasm and nucleus. Involved in pre-tRNA splicing, probably by affecting the interaction of pre-tRNA with splicing endonuclease. This Saccharomyces cerevisiae (strain YJM789) (Baker's yeast) protein is Exportin-T (LOS1).